The chain runs to 100 residues: Urease subunit gamma (100 aa).

It belongs to the urease gamma subunit family. In terms of assembly, heterotrimer of UreA (gamma), UreB (beta) and UreC (alpha) subunits. Three heterotrimers associate to form the active enzyme.

It localises to the cytoplasm. It catalyses the reaction urea + 2 H2O + H(+) = hydrogencarbonate + 2 NH4(+). The protein operates within nitrogen metabolism; urea degradation; CO(2) and NH(3) from urea (urease route): step 1/1. The protein is Urease subunit gamma of Shewanella halifaxensis (strain HAW-EB4).